We begin with the raw amino-acid sequence, 240 residues long: Lipoprotein signal peptidase (240 aa).

The next 4 membrane-spanning stretches (helical) occupy residues 38 to 58 (LIWK…TSFL), 73 to 93 (LIPG…FGTL), 98 to 118 (PSLV…VLLF), and 120 to 140 (SNYL…SNII). Active-site residues include Asp-162 and Asp-179. A helical membrane pass occupies residues 177–197 (FPDTFVIIGMIFVGIQIIISF).

Belongs to the peptidase A8 family.

The protein localises to the cell membrane. The catalysed reaction is Release of signal peptides from bacterial membrane prolipoproteins. Hydrolyzes -Xaa-Yaa-Zaa-|-(S,diacylglyceryl)Cys-, in which Xaa is hydrophobic (preferably Leu), and Yaa (Ala or Ser) and Zaa (Gly or Ala) have small, neutral side chains.. It participates in protein modification; lipoprotein biosynthesis (signal peptide cleavage). In terms of biological role, this protein specifically catalyzes the removal of signal peptides from prolipoproteins. The polypeptide is Lipoprotein signal peptidase (Malacoplasma penetrans (strain HF-2) (Mycoplasma penetrans)).